The sequence spans 366 residues: 3-dehydroquinate synthase (366 aa).

NAD(+) is bound by residues 71-76 (DGEQYK), 105-109 (GVIGD), 129-130 (TT), K142, K151, and 169-172 (CLKT). E184, H247, and H264 together coordinate Zn(2+).

The protein belongs to the sugar phosphate cyclases superfamily. Dehydroquinate synthase family. Co(2+) serves as cofactor. Requires Zn(2+) as cofactor. NAD(+) is required as a cofactor.

Its subcellular location is the cytoplasm. It catalyses the reaction 7-phospho-2-dehydro-3-deoxy-D-arabino-heptonate = 3-dehydroquinate + phosphate. It functions in the pathway metabolic intermediate biosynthesis; chorismate biosynthesis; chorismate from D-erythrose 4-phosphate and phosphoenolpyruvate: step 2/7. Functionally, catalyzes the conversion of 3-deoxy-D-arabino-heptulosonate 7-phosphate (DAHP) to dehydroquinate (DHQ). The chain is 3-dehydroquinate synthase from Serratia proteamaculans (strain 568).